The chain runs to 392 residues: uncharacterized protein (392 aa).

One can recognise a J domain in the interval 7-76; sequence TEYYDLLGIS…RSQYDQFGKE (70 aa). At serine 108 the chain carries Phosphoserine.

This is an uncharacterized protein from Schizosaccharomyces pombe (strain 972 / ATCC 24843) (Fission yeast).